The primary structure comprises 100 residues: Acylphosphatase (100 aa).

One can recognise an Acylphosphatase-like domain in the interval 14-100 (RLSAWVHGHV…RGDLTGFEER (87 aa)). Active-site residues include R29 and N47.

Belongs to the acylphosphatase family.

The enzyme catalyses an acyl phosphate + H2O = a carboxylate + phosphate + H(+). The sequence is that of Acylphosphatase (acyP) from Nocardia farcinica (strain IFM 10152).